The chain runs to 169 residues: Ribosome maturation factor RimM (169 aa).

One can recognise a PRC barrel domain in the interval 97–169 (PGEYYWYQLI…VITVDWDMNF (73 aa)).

It belongs to the RimM family. As to quaternary structure, binds ribosomal protein uS19.

The protein localises to the cytoplasm. Functionally, an accessory protein needed during the final step in the assembly of 30S ribosomal subunit, possibly for assembly of the head region. Essential for efficient processing of 16S rRNA. May be needed both before and after RbfA during the maturation of 16S rRNA. It has affinity for free ribosomal 30S subunits but not for 70S ribosomes. This is Ribosome maturation factor RimM from Legionella pneumophila subsp. pneumophila (strain Philadelphia 1 / ATCC 33152 / DSM 7513).